Here is a 548-residue protein sequence, read N- to C-terminus: Chaperonin GroEL (548 aa).

ATP-binding positions include 30 to 33, lysine 51, 87 to 91, glycine 415, and aspartate 496; these read TLGP and DGTTT.

This sequence belongs to the chaperonin (HSP60) family. In terms of assembly, forms a cylinder of 14 subunits composed of two heptameric rings stacked back-to-back. Interacts with the co-chaperonin GroES.

Its subcellular location is the cytoplasm. The enzyme catalyses ATP + H2O + a folded polypeptide = ADP + phosphate + an unfolded polypeptide.. In terms of biological role, together with its co-chaperonin GroES, plays an essential role in assisting protein folding. The GroEL-GroES system forms a nano-cage that allows encapsulation of the non-native substrate proteins and provides a physical environment optimized to promote and accelerate protein folding. This chain is Chaperonin GroEL, found in Haemophilus influenzae (strain PittGG).